Here is a 301-residue protein sequence, read N- to C-terminus: Protease HtpX (301 aa).

Helical transmembrane passes span 4–24 (IGLF…ILSL) and 38–58 (LGNL…ISLL). Residue H147 coordinates Zn(2+). E148 is an active-site residue. Residue H151 coordinates Zn(2+). Transmembrane regions (helical) follow at residues 155–175 (GDMV…MFFA) and 200–220 (FAIT…IVMW). E226 is a Zn(2+) binding site.

This sequence belongs to the peptidase M48B family. Zn(2+) serves as cofactor.

The protein localises to the cell inner membrane. In Acinetobacter baylyi (strain ATCC 33305 / BD413 / ADP1), this protein is Protease HtpX.